The following is a 91-amino-acid chain: Small ribosomal subunit protein uS19 (91 aa).

Belongs to the universal ribosomal protein uS19 family.

Its function is as follows. Protein S19 forms a complex with S13 that binds strongly to the 16S ribosomal RNA. In Trichodesmium erythraeum (strain IMS101), this protein is Small ribosomal subunit protein uS19.